Here is a 67-residue protein sequence, read N- to C-terminus: MAILRTSEIRTMTIEERADELENLNNELVRERALTSAGGAPENPGRIGEIRRTIARIKTIQHELNEI.

Belongs to the universal ribosomal protein uL29 family.

This Methanosarcina acetivorans (strain ATCC 35395 / DSM 2834 / JCM 12185 / C2A) protein is Large ribosomal subunit protein uL29.